We begin with the raw amino-acid sequence, 545 residues long: Leucine-rich repeat LGI family member 2 (545 aa).

The N-terminal stretch at 1–28 (MALRRGGCGALGLLLLLLGAACLIPRSA) is a signal peptide. The LRRNT domain occupies 29-65 (QVRRLARCPATCSCTKESIICVGSSWVPRIVPGDISS). Asn70 carries N-linked (GlcNAc...) asparagine glycosylation. 3 LRR repeats span residues 86-107 (SLQL…AFAG), 110-131 (HLEY…AFRG), and 134-155 (DLTH…VFSD). The LRRCT domain occupies 167 to 217 (NKFECDCKAKWLYLWLKMTNSTVSDVLCIGPPEYQEKKLNDVTSFDYECTT). Residue Asn186 is glycosylated (N-linked (GlcNAc...) asparagine). 7 EAR repeats span residues 219–261 (DFVV…EWDH), 265–307 (NFRS…KYDE), 311–358 (KFVK…KWNS), 360–403 (GFYS…QWNK), 407–450 (KFVP…RWNS), 452–494 (QFVE…QWDK), and 498–540 (LFKK…EHII). An N-linked (GlcNAc...) asparagine glycan is attached at Asn271. A glycan (N-linked (GlcNAc...) asparagine) is linked at Asn402.

As to expression, brain, heart and placenta.

It localises to the secreted. Required for the development of soma-targeting inhibitory GABAergic synapses made by parvalbumin-positive basket cells. This is Leucine-rich repeat LGI family member 2 (LGI2) from Homo sapiens (Human).